Reading from the N-terminus, the 297-residue chain is Aspartate carbamoyltransferase catalytic subunit (297 aa).

Arg-52 and Thr-53 together coordinate carbamoyl phosphate. L-aspartate is bound at residue Lys-80. Residues Arg-102, His-130, and Gln-133 each contribute to the carbamoyl phosphate site. L-aspartate is bound by residues Arg-167 and Arg-217. Gly-256 and Pro-257 together coordinate carbamoyl phosphate.

The protein belongs to the aspartate/ornithine carbamoyltransferase superfamily. ATCase family. In terms of assembly, heterododecamer (2C3:3R2) of six catalytic PyrB chains organized as two trimers (C3), and six regulatory PyrI chains organized as three dimers (R2).

The enzyme catalyses carbamoyl phosphate + L-aspartate = N-carbamoyl-L-aspartate + phosphate + H(+). The protein operates within pyrimidine metabolism; UMP biosynthesis via de novo pathway; (S)-dihydroorotate from bicarbonate: step 2/3. In terms of biological role, catalyzes the condensation of carbamoyl phosphate and aspartate to form carbamoyl aspartate and inorganic phosphate, the committed step in the de novo pyrimidine nucleotide biosynthesis pathway. The chain is Aspartate carbamoyltransferase catalytic subunit from Helicobacter hepaticus (strain ATCC 51449 / 3B1).